The chain runs to 131 residues: Small ribosomal subunit protein uS8 (131 aa).

It belongs to the universal ribosomal protein uS8 family. As to quaternary structure, part of the 30S ribosomal subunit. Contacts proteins S5 and S12.

Its function is as follows. One of the primary rRNA binding proteins, it binds directly to 16S rRNA central domain where it helps coordinate assembly of the platform of the 30S subunit. This chain is Small ribosomal subunit protein uS8, found in Hamiltonella defensa subsp. Acyrthosiphon pisum (strain 5AT).